We begin with the raw amino-acid sequence, 453 residues long: Serine/threonine-protein phosphatase 2A 55 kDa regulatory subunit B delta isoform (453 aa).

WD repeat units follow at residues 32 to 71 (AEAD…KGRA), 97 to 138 (EIEE…KRAE), 181 to 219 (AHTY…RSFN), and 230 to 270 (ELTE…LCDR). Serine 285 carries the phosphoserine modification. WD repeat units lie at residues 289-327 (EIIS…RPVE), 344-385 (ENDC…DVTL), and 420-452 (DFNK…QDKI). Tyrosine 305 is subject to Phosphotyrosine. Threonine 308 bears the Phosphothreonine mark.

The protein belongs to the phosphatase 2A regulatory subunit B family. In terms of assembly, PP2A consists of a common heterodimeric core enzyme, composed of a 36 kDa catalytic subunit (subunit C) and a 65 kDa constant regulatory subunit (PR65 or subunit A), that associates with a variety of regulatory subunits. Proteins that associate with the core dimer include three families of regulatory subunits B (the R2/B/PR55/B55, R3/B''/PR72/PR130/PR59 and R5/B'/B56 families), the 48 kDa variable regulatory subunit, viral proteins, and cell signaling molecules. Interacts with IER5.

The protein resides in the cytoplasm. Substrate-recognition subunit of protein phosphatase 2A (PP2A) that plays a key role in cell cycle by controlling mitosis entry and exit. Involved in chromosome clustering during late mitosis by mediating dephosphorylation of MKI67. The activity of PP2A complexes containing PPP2R2D (PR55-delta) fluctuate during the cell cycle: the activity is high in interphase and low in mitosis. This is Serine/threonine-protein phosphatase 2A 55 kDa regulatory subunit B delta isoform from Mus musculus (Mouse).